The sequence spans 374 residues: Beta-1,3-N-acetylglucosaminyltransferase lunatic fringe (374 aa).

Over 1-8 (MLKTYRGK) the chain is Cytoplasmic. The helical; Signal-anchor for type II membrane protein transmembrane segment at 9 to 29 (VVVSLAGATVTCLGFLLFLSQ) threads the bilayer. The Lumenal segment spans residues 30–374 (HQRIQADGMQ…TPWCPPQVAY (345 aa)). N-linked (GlcNAc...) asparagine glycosylation is present at Asn-40. Positions 80–100 (RSRREADKPSEAPGAATDAPP) are disordered. Arg-123 provides a ligand contact to substrate. Asn-162 is a glycosylation site (N-linked (GlcNAc...) asparagine). Disulfide bonds link Cys-163/Cys-174 and Cys-192/Cys-255. Asp-196 is a substrate binding site. Asp-197 provides a ligand contact to Mn(2+). Asp-285 is a catalytic residue. His-309 serves as a coordination point for Mn(2+). The cysteines at positions 359 and 368 are disulfide-linked.

It belongs to the glycosyltransferase 31 family. The cofactor is Mn(2+). It depends on Co(2+) as a cofactor. Post-translationally, a soluble form may be derived from the membrane form by proteolytic processing. In the embryo, expressed along the A-P axis of the neural tube, within the lateral plate mesoderm, in the presomitic mesoderm and the somites, in specific rhombomeres of the hindbrain (even-numbered rhombomeres) and in the otic vesicles.

It localises to the golgi apparatus membrane. It carries out the reaction 3-O-(alpha-L-fucosyl)-L-threonyl-[EGF-like domain protein] + UDP-N-acetyl-alpha-D-glucosamine = 3-O-(N-acetyl-beta-D-glucosaminyl-(1-&gt;3)-alpha-L-fucosyl)-L-threonyl-[EGF-like domain protein] + UDP + H(+). The catalysed reaction is 3-O-(alpha-L-fucosyl)-L-seryl-[EGF-like domain protein] + UDP-N-acetyl-alpha-D-glucosamine = 3-O-(N-acetyl-beta-D-glucosaminyl-(1-&gt;3)-alpha-L-fucosyl)-L-seryl-[EGF-like domain protein] + UDP + H(+). Functionally, glycosyltransferase that initiates the elongation of O-linked fucose residues attached to EGF-like repeats in the extracellular domain of Notch molecules. Involved in the correct formation of boundaries in the somites and hindbrain. Required for Delta-Notch-mediated induction of hypochord cells at the lateral borders of the midline precursor domain. The polypeptide is Beta-1,3-N-acetylglucosaminyltransferase lunatic fringe (lfng) (Danio rerio (Zebrafish)).